The following is a 420-amino-acid chain: Signal recognition particle receptor FtsY (420 aa).

Residues 28–62 (DLDRAMGKVAPDNKKTRDAKAAADARLAAEAEEAK) are compositionally biased toward basic and acidic residues. The tract at residues 28 to 118 (DLDRAMGKVA…PETPESVGSR (91 aa)) is disordered. Residues 63 to 104 (AATAAEPAKSAESAKAEPAPAAQAEPEPAAAPKPESQPASKP) show a composition bias toward low complexity. Residues 227–234 (GVNGTGKT), 310–314 (DTAGR), and 372–375 (SKLD) contribute to the GTP site.

The protein belongs to the GTP-binding SRP family. FtsY subfamily. In terms of assembly, part of the signal recognition particle protein translocation system, which is composed of SRP and FtsY.

It is found in the cell membrane. Its subcellular location is the cytoplasm. It catalyses the reaction GTP + H2O = GDP + phosphate + H(+). Involved in targeting and insertion of nascent membrane proteins into the cytoplasmic membrane. Acts as a receptor for the complex formed by the signal recognition particle (SRP) and the ribosome-nascent chain (RNC). The sequence is that of Signal recognition particle receptor FtsY from Bifidobacterium longum (strain NCC 2705).